Consider the following 1015-residue polypeptide: Cytosolic carboxypeptidase 1 (1015 aa).

Residues 384 to 462 (LPTATPSTPG…GALPKTTRLN (79 aa)) are disordered. A compositionally biased stretch (acidic residues) spans 416 to 451 (EDGMDEEDEAFVRDDDDEGKDDRGSDDDDGKDDDEI). The region spanning 727–1013 (YPYTYSFLNS…DLLHSFLEMT (287 aa)) is the Peptidase M14 domain. Residues His-792, Glu-795, and His-891 each coordinate Zn(2+). The active-site Proton donor/acceptor is the Glu-977.

The protein belongs to the peptidase M14 family. The cofactor is Zn(2+). As to expression, in hermaphrodites and males, expressed in amphid and IL2 ciliated sensory neurons. In males, expressed in CEM head neurons, RnB and HOB tail neurons, and in gubernacular erector and retractor muscles.

It is found in the perikaryon. The protein resides in the cell projection. Its subcellular location is the cilium. It localises to the dendrite. Functionally, catalyzes the deglutamylation of polyglutamate side chains generated by post-translational polyglutamylation of proteins such as tubulins. Via the deglutamylation of tubulin, regulates the localization and velocity of kinesin motors and the structural integrity of microtubules in sensory cilia. In male CEM sensory neurons, regulates the cilia release of bioactive extracellular vesicles. Also regulates microtubule dynamics in uterine muscle cells. This is Cytosolic carboxypeptidase 1 from Caenorhabditis elegans.